We begin with the raw amino-acid sequence, 347 residues long: Quinolinate synthase (347 aa).

His47 and Ser68 together coordinate iminosuccinate. Residue Cys113 participates in [4Fe-4S] cluster binding. Iminosuccinate is bound by residues 139 to 141 (YAN) and Ser156. Cys200 is a binding site for [4Fe-4S] cluster. Residues 226–228 (HPE) and Thr243 each bind iminosuccinate. Cys297 contributes to the [4Fe-4S] cluster binding site.

This sequence belongs to the quinolinate synthase family. Type 1 subfamily. The cofactor is [4Fe-4S] cluster.

The protein resides in the cytoplasm. It carries out the reaction iminosuccinate + dihydroxyacetone phosphate = quinolinate + phosphate + 2 H2O + H(+). Its pathway is cofactor biosynthesis; NAD(+) biosynthesis; quinolinate from iminoaspartate: step 1/1. Functionally, catalyzes the condensation of iminoaspartate with dihydroxyacetone phosphate to form quinolinate. The protein is Quinolinate synthase of Shigella flexneri serotype 5b (strain 8401).